The chain runs to 548 residues: CTP synthase (548 aa).

The interval methionine 1–leucine 270 is amidoligase domain. Serine 13 lines the CTP pocket. Serine 13 is a UTP binding site. Residues serine 14–isoleucine 19 and aspartate 71 each bind ATP. Mg(2+)-binding residues include aspartate 71 and glutamate 144. CTP-binding positions include aspartate 151 to glutamate 153, lysine 191 to glutamine 196, and lysine 227. Residues lysine 191–glutamine 196 and lysine 227 contribute to the UTP site. In terms of domain architecture, Glutamine amidotransferase type-1 spans threonine 295–arginine 545. An L-glutamine-binding site is contributed by glycine 356. Cysteine 383 serves as the catalytic Nucleophile; for glutamine hydrolysis. Residues leucine 384–glutamine 387, glutamate 407, and arginine 473 each bind L-glutamine. Residues histidine 518 and glutamate 520 contribute to the active site.

This sequence belongs to the CTP synthase family. As to quaternary structure, homotetramer.

It carries out the reaction UTP + L-glutamine + ATP + H2O = CTP + L-glutamate + ADP + phosphate + 2 H(+). It catalyses the reaction L-glutamine + H2O = L-glutamate + NH4(+). The enzyme catalyses UTP + NH4(+) + ATP = CTP + ADP + phosphate + 2 H(+). It functions in the pathway pyrimidine metabolism; CTP biosynthesis via de novo pathway; CTP from UDP: step 2/2. Its activity is regulated as follows. Allosterically activated by GTP, when glutamine is the substrate; GTP has no effect on the reaction when ammonia is the substrate. The allosteric effector GTP functions by stabilizing the protein conformation that binds the tetrahedral intermediate(s) formed during glutamine hydrolysis. Inhibited by the product CTP, via allosteric rather than competitive inhibition. Functionally, catalyzes the ATP-dependent amination of UTP to CTP with either L-glutamine or ammonia as the source of nitrogen. Regulates intracellular CTP levels through interactions with the four ribonucleotide triphosphates. The protein is CTP synthase of Bordetella petrii (strain ATCC BAA-461 / DSM 12804 / CCUG 43448).